Consider the following 321-residue polypeptide: Lipoyl synthase (321 aa).

Cys-68, Cys-73, Cys-79, Cys-94, Cys-98, Cys-101, and Ser-308 together coordinate [4Fe-4S] cluster. The Radical SAM core domain occupies 80–297 (FNHGTATFMI…KAEAMAMGFT (218 aa)).

This sequence belongs to the radical SAM superfamily. Lipoyl synthase family. [4Fe-4S] cluster serves as cofactor.

The protein resides in the cytoplasm. The catalysed reaction is [[Fe-S] cluster scaffold protein carrying a second [4Fe-4S](2+) cluster] + N(6)-octanoyl-L-lysyl-[protein] + 2 oxidized [2Fe-2S]-[ferredoxin] + 2 S-adenosyl-L-methionine + 4 H(+) = [[Fe-S] cluster scaffold protein] + N(6)-[(R)-dihydrolipoyl]-L-lysyl-[protein] + 4 Fe(3+) + 2 hydrogen sulfide + 2 5'-deoxyadenosine + 2 L-methionine + 2 reduced [2Fe-2S]-[ferredoxin]. It functions in the pathway protein modification; protein lipoylation via endogenous pathway; protein N(6)-(lipoyl)lysine from octanoyl-[acyl-carrier-protein]: step 2/2. Functionally, catalyzes the radical-mediated insertion of two sulfur atoms into the C-6 and C-8 positions of the octanoyl moiety bound to the lipoyl domains of lipoate-dependent enzymes, thereby converting the octanoylated domains into lipoylated derivatives. In Cronobacter sakazakii (strain ATCC BAA-894) (Enterobacter sakazakii), this protein is Lipoyl synthase.